A 212-amino-acid polypeptide reads, in one-letter code: Methylthioribulose-1-phosphate dehydratase (212 aa).

2 residues coordinate Zn(2+): His97 and His99.

The protein belongs to the aldolase class II family. MtnB subfamily. In terms of assembly, homotetramer. Zn(2+) is required as a cofactor.

The catalysed reaction is 5-(methylsulfanyl)-D-ribulose 1-phosphate = 5-methylsulfanyl-2,3-dioxopentyl phosphate + H2O. Its pathway is amino-acid biosynthesis; L-methionine biosynthesis via salvage pathway; L-methionine from S-methyl-5-thio-alpha-D-ribose 1-phosphate: step 2/6. In terms of biological role, catalyzes the dehydration of methylthioribulose-1-phosphate (MTRu-1-P) into 2,3-diketo-5-methylthiopentyl-1-phosphate (DK-MTP-1-P). The protein is Methylthioribulose-1-phosphate dehydratase of Bacillus cereus (strain ATCC 10987 / NRS 248).